The primary structure comprises 366 residues: Terpene synthase 4 (366 aa).

The DDxx(x)D/E motif signature appears at 91-96 (DDFLER). The short motif at 241 to 249 (NDCVSYAKE) is the NDxxSxxxD/E motif element.

The protein belongs to the terpene synthase family.

The catalysed reaction is (2E,6E)-farnesyl diphosphate = (1S,2S,4R)-beta-elemene + diphosphate. Terpene synthase that converts its substrate farnesyl diphosphate (FPP) into the sesquiterpenes bicycloelemene, beta-elemene and 2 yet unidentified sesquiterpenes. The chain is Terpene synthase 4 from Dictyostelium purpureum (Slime mold).